Here is a 365-residue protein sequence, read N- to C-terminus: Regulatory protein RapG (365 aa).

5 TPR repeats span residues 135 to 168, 169 to 202, 209 to 242, 244 to 284, and 326 to 359; these read GKLYYKLGQNIVSLNHTRQAVKTFREETDYKKKL, ASALITMSGNFTEMSQFEEAEAYLDEAIRITSEL, AQLLHNFGLLHAQSGKSEEAVSKLEEALQNDEYA, SAYY…EPNR, and RELSILAGERYRELELYKEAAHFFYEALQIEELI.

Belongs to the Rap family.

Its subcellular location is the cytoplasm. Inhibited by PhrG. Involved in the regulation of expression of DegU-controlled genes. Inhibits the binding of DegU to the promoter regions of aprE, coding for an extracellular alkaline protease, and comK, a master regulator for development of genetic competence. RapG does not stimulate dephosphorylation of DegU-P. The chain is Regulatory protein RapG (rapG) from Bacillus subtilis (strain 168).